Consider the following 144-residue polypeptide: MKIKIINRSHHPLPAYATSASAGMDLRASIEEPITLLPLERRLIPTGLFIELPVGYEAQIRPRSGLALRHGITLVNSPGTIDADYRGEIGIIMINLSNTPFTIADGERICQLVIARHEQAEWVLTDELADTERGAGGFGHTGKE.

Residues 63–65 (RSG), Asn-76, and 80–82 (TID) contribute to the substrate site.

Belongs to the dUTPase family. Mg(2+) serves as cofactor.

It carries out the reaction dUTP + H2O = dUMP + diphosphate + H(+). It participates in pyrimidine metabolism; dUMP biosynthesis; dUMP from dCTP (dUTP route): step 2/2. This enzyme is involved in nucleotide metabolism: it produces dUMP, the immediate precursor of thymidine nucleotides and it decreases the intracellular concentration of dUTP so that uracil cannot be incorporated into DNA. The sequence is that of Deoxyuridine 5'-triphosphate nucleotidohydrolase from Porphyromonas gingivalis (strain ATCC 33277 / DSM 20709 / CIP 103683 / JCM 12257 / NCTC 11834 / 2561).